Consider the following 508-residue polypeptide: 3-octaprenyl-4-hydroxybenzoate carboxy-lyase (508 aa).

A Mn(2+)-binding site is contributed by Asn178. Prenylated FMN-binding positions include 181–183 (IYR), 195–197 (RWL), and 200–201 (RG). Mn(2+) is bound at residue Glu244. Asp303 functions as the Proton donor in the catalytic mechanism.

It belongs to the UbiD family. Homohexamer. Requires prenylated FMN as cofactor. Mn(2+) serves as cofactor.

It localises to the cell membrane. It catalyses the reaction a 4-hydroxy-3-(all-trans-polyprenyl)benzoate + H(+) = a 2-(all-trans-polyprenyl)phenol + CO2. Its pathway is cofactor biosynthesis; ubiquinone biosynthesis. In terms of biological role, catalyzes the decarboxylation of 3-octaprenyl-4-hydroxy benzoate to 2-octaprenylphenol, an intermediate step in ubiquinone biosynthesis. This chain is 3-octaprenyl-4-hydroxybenzoate carboxy-lyase, found in Cupriavidus taiwanensis (strain DSM 17343 / BCRC 17206 / CCUG 44338 / CIP 107171 / LMG 19424 / R1) (Ralstonia taiwanensis (strain LMG 19424)).